Reading from the N-terminus, the 555-residue chain is Formate--tetrahydrofolate ligase (555 aa).

64–71 contacts ATP; it reads TKAGIGKT.

It belongs to the formate--tetrahydrofolate ligase family.

The catalysed reaction is (6S)-5,6,7,8-tetrahydrofolate + formate + ATP = (6R)-10-formyltetrahydrofolate + ADP + phosphate. Its pathway is one-carbon metabolism; tetrahydrofolate interconversion. In Bacteroides fragilis (strain ATCC 25285 / DSM 2151 / CCUG 4856 / JCM 11019 / LMG 10263 / NCTC 9343 / Onslow / VPI 2553 / EN-2), this protein is Formate--tetrahydrofolate ligase.